A 160-amino-acid chain; its full sequence is SsrA-binding protein (160 aa).

It belongs to the SmpB family.

The protein localises to the cytoplasm. Functionally, required for rescue of stalled ribosomes mediated by trans-translation. Binds to transfer-messenger RNA (tmRNA), required for stable association of tmRNA with ribosomes. tmRNA and SmpB together mimic tRNA shape, replacing the anticodon stem-loop with SmpB. tmRNA is encoded by the ssrA gene; the 2 termini fold to resemble tRNA(Ala) and it encodes a 'tag peptide', a short internal open reading frame. During trans-translation Ala-aminoacylated tmRNA acts like a tRNA, entering the A-site of stalled ribosomes, displacing the stalled mRNA. The ribosome then switches to translate the ORF on the tmRNA; the nascent peptide is terminated with the 'tag peptide' encoded by the tmRNA and targeted for degradation. The ribosome is freed to recommence translation, which seems to be the essential function of trans-translation. The polypeptide is SsrA-binding protein (Enterobacter sp. (strain 638)).